The primary structure comprises 222 residues: THAP domain-containing protein 6 (222 aa).

The segment at 1–89 (MVKCCSAIGC…LKPGVIPSIF (89 aa)) adopts a THAP-type zinc-finger fold. An HCFC1-binding motif (HBM) motif is present at residues 139-142 (EHSY). The stretch at 149-194 (KKLKHKLDHVIGELEDTKESLRNVLDREKRFQKSLRKTIRELKDEC) forms a coiled coil.

This chain is THAP domain-containing protein 6 (THAP6), found in Homo sapiens (Human).